The sequence spans 821 residues: Leucine--tRNA ligase (821 aa).

A 'HIGH' region motif is present at residues proline 42–histidine 52. A 'KMSKS' region motif is present at residues lysine 583–serine 587. Lysine 586 serves as a coordination point for ATP.

It belongs to the class-I aminoacyl-tRNA synthetase family.

The protein localises to the cytoplasm. It catalyses the reaction tRNA(Leu) + L-leucine + ATP = L-leucyl-tRNA(Leu) + AMP + diphosphate. This chain is Leucine--tRNA ligase, found in Carboxydothermus hydrogenoformans (strain ATCC BAA-161 / DSM 6008 / Z-2901).